The following is a 325-amino-acid chain: Casein kinase I isoform alpha (325 aa).

An N-acetylalanine modification is found at Ala2. Phosphoserine is present on Ser4. Lys8 carries the post-translational modification N6-acetyllysine. Residues 17 to 285 form the Protein kinase domain; the sequence is YKLVRKIGSG…YLRQLFRILF (269 aa). ATP contacts are provided by residues 23-31 and Lys46; that span reads IGSGSFGDI. Catalysis depends on Asp136, which acts as the Proton acceptor. Position 156 is a phosphoserine (Ile156).

It belongs to the protein kinase superfamily. CK1 Ser/Thr protein kinase family. Casein kinase I subfamily. As to quaternary structure, interacts with the Axin complex. Interacts with TUT1, leading to TUT1 phosphorylation. Interacts with FAM83A, FAM83B, FAM83C, FAM83D, FAM83E, FAM83F, FAM83G and FAM83H (via DUF1669). Interaction with FAM83H recruits CSNK1A1 to keratin filaments. Phosphorylated by MTOR in response to mitogenic stimulation, leading to its activation.

It localises to the cytoplasm. The protein resides in the cytoskeleton. Its subcellular location is the microtubule organizing center. It is found in the centrosome. The protein localises to the chromosome. It localises to the centromere. The protein resides in the kinetochore. Its subcellular location is the nucleus speckle. It is found in the cilium basal body. The protein localises to the spindle. The enzyme catalyses L-seryl-[protein] + ATP = O-phospho-L-seryl-[protein] + ADP + H(+). It catalyses the reaction L-threonyl-[protein] + ATP = O-phospho-L-threonyl-[protein] + ADP + H(+). Its function is as follows. Casein kinases are operationally defined by their preferential utilization of acidic proteins such as caseins as substrates. Can phosphorylate a large number of proteins. Participates in Wnt signaling. Phosphorylates CTNNB1 at 'Ser-45'. May phosphorylate PER1 and PER2. May play a role in segregating chromosomes during mitosis. May play a role in keratin cytoskeleton disassembly and thereby, it may regulate epithelial cell migration. Acts as a positive regulator of mTORC1 and mTORC2 signaling in response to nutrients by mediating phosphorylation of DEPTOR inhibitor. Acts as an inhibitor of NLRP3 inflammasome assembly by mediating phosphorylation of NLRP3. This is Casein kinase I isoform alpha (Csnk1a1) from Rattus norvegicus (Rat).